The following is a 168-amino-acid chain: Myosin regulatory light chain 11 (168 aa).

Alanine 2 carries the post-translational modification N,N,N-trimethylalanine. Position 15 is a phosphoserine (serine 15). 3 consecutive EF-hand domains span residues 24–59 (TQIQ…MGRL), 94–129 (DPED…QCDR), and 130–165 (FTPE…GEDK). Ca(2+) contacts are provided by aspartate 37, asparagine 39, aspartate 41, and aspartate 48.

In terms of assembly, myosin is a hexamer of 2 heavy chains and 4 light chains. In terms of processing, the N-terminus is blocked. N,N,N-trimethylalanine, found in other myosin light chains would not have been detected in the N-terminal tryptic peptide in PubMed:7358336 because it would remain trimethylated and ninhydrin negative after hydrolysis.

Functionally, myosin regulatory subunit that plays an essential to maintain muscle integrity during early development. Plays a role in muscle contraction. This chain is Myosin regulatory light chain 11 (MYL11), found in Gallus gallus (Chicken).